Consider the following 179-residue polypeptide: Inner membrane-spanning protein YciB (179 aa).

Transmembrane regions (helical) follow at residues 11–31 (ILFFAVYKLQGIQAAAITLII), 52–69 (LIMGSAVVFFGSLSAYFN), 71–91 (LEFLKWKVTVVYALFSLILLV), 121–141 (LGWAVFFLLCMLINLYISQYL), and 149–169 (FKTFGILGMTLIATLVTGVYI).

This sequence belongs to the YciB family.

Its subcellular location is the cell inner membrane. Functionally, plays a role in cell envelope biogenesis, maintenance of cell envelope integrity and membrane homeostasis. This Histophilus somni (strain 129Pt) (Haemophilus somnus) protein is Inner membrane-spanning protein YciB.